Consider the following 416-residue polypeptide: Secreted RxLR effector protein 25 (416 aa).

The first 20 residues, 1–20 (MRSWLLLLVGLSSYFALSTS), serve as a signal peptide directing secretion. A RxLR-dEER motif is present at residues 49 to 88 (RKLRAPGGDTNTLKDSGKARREKKVWKLFCRVFLQLDDEK).

This sequence belongs to the RxLR effector family.

The protein resides in the secreted. The protein localises to the host cytoplasm. It is found in the host nucleus. Functionally, effector that partially suppresses the tobacco programmed cell death induced by cell death-inducing proteins. This Plasmopara viticola (Downy mildew of grapevine) protein is Secreted RxLR effector protein 25.